The chain runs to 92 residues: Protein RnfH (92 aa).

It belongs to the UPF0125 (RnfH) family.

The sequence is that of Protein RnfH from Neisseria gonorrhoeae (strain NCCP11945).